Reading from the N-terminus, the 239-residue chain is MSDENDTPEELADISGVGPSKAEALAEAGFESVADVQAADQSELAEADGIGNALAARIKADVGGLEVEADTDAEVEEVGGDDEADTDADVETELRARGLTEKTPDLSEDEQRLLQKRRSVNTPQFNRQDYHKKKRTPTSWRRPKGTLSKQRRGIKGKGDTVEAGFRTPTAVRGKHPSGFEEVRVHNTDDLAGVDPDTEAARIASKVGARKRERIEEHAESQGIRVLNPTYVEVEVEDNE.

2 stretches are compositionally biased toward acidic residues: residues 1-12 and 67-91; these read MSDENDTPEELA and VEADTDAEVEEVGGDDEADTDADVE. Disordered regions lie at residues 1-23 and 64-178; these read MSDENDTPEELADISGVGPSKAE and GLEV…HPSG. The span at 92–113 shows a compositional bias: basic and acidic residues; it reads TELRARGLTEKTPDLSEDEQRL. The span at 130–155 shows a compositional bias: basic residues; sequence YHKKKRTPTSWRRPKGTLSKQRRGIK.

This sequence belongs to the eukaryotic ribosomal protein eL32 family.

This Halobacterium salinarum (strain ATCC 700922 / JCM 11081 / NRC-1) (Halobacterium halobium) protein is Large ribosomal subunit protein eL32 (rpl32e).